The following is a 635-amino-acid chain: Beta-mannosyltransferase 2 (635 aa).

At methionine 1–asparagine 6 the chain is on the cytoplasmic side. The chain crosses the membrane as a helical span at residues phenylalanine 7–tryptophan 27. The Extracellular portion of the chain corresponds to asparagine 28–lysine 635. The N-linked (GlcNAc...) asparagine glycan is linked to asparagine 484. Residues threonine 512 to lysine 635 are a coiled coil. Residues glutamate 517–lysine 635 form a disordered region.

The protein belongs to the BMT family.

The protein resides in the membrane. In terms of biological role, beta-mannosyltransferase involved in cell wall biosynthesis. Initiates the beta-mannosylation of core N-linked glycans. The protein is Beta-mannosyltransferase 2 (BMT2) of Komagataella phaffii (strain ATCC 76273 / CBS 7435 / CECT 11047 / NRRL Y-11430 / Wegner 21-1) (Yeast).